The sequence spans 335 residues: Phosphate acyltransferase (335 aa).

Belongs to the PlsX family. Homodimer. Probably interacts with PlsY.

It is found in the cytoplasm. It catalyses the reaction a fatty acyl-[ACP] + phosphate = an acyl phosphate + holo-[ACP]. Its pathway is lipid metabolism; phospholipid metabolism. Functionally, catalyzes the reversible formation of acyl-phosphate (acyl-PO(4)) from acyl-[acyl-carrier-protein] (acyl-ACP). This enzyme utilizes acyl-ACP as fatty acyl donor, but not acyl-CoA. The polypeptide is Phosphate acyltransferase (Streptococcus pyogenes serotype M1).